Here is a 390-residue protein sequence, read N- to C-terminus: DNA primase small subunit PriS (390 aa).

Residues aspartate 98, aspartate 100, and aspartate 296 contribute to the active site.

The protein belongs to the eukaryotic-type primase small subunit family. In terms of assembly, heterodimer of a small subunit (PriS) and a large subunit (PriL). Requires Mg(2+) as cofactor. The cofactor is Mn(2+).

Catalytic subunit of DNA primase, an RNA polymerase that catalyzes the synthesis of short RNA molecules used as primers for DNA polymerase during DNA replication. The small subunit contains the primase catalytic core and has DNA synthesis activity on its own. Binding to the large subunit stabilizes and modulates the activity, increasing the rate of DNA synthesis while decreasing the length of the DNA fragments, and conferring RNA synthesis capability. The DNA polymerase activity may enable DNA primase to also catalyze primer extension after primer synthesis. May also play a role in DNA repair. The polypeptide is DNA primase small subunit PriS (Methanococcoides burtonii (strain DSM 6242 / NBRC 107633 / OCM 468 / ACE-M)).